The chain runs to 527 residues: N-acetylglutamate synthase, mitochondrial (527 aa).

The transit peptide at 1-39 (MAKVNSGSSGCRAMVMAGQFWTKPFALSSQRSGPHRRSA) directs the protein to the mitochondrion. The segment at 28–65 (SSQRSGPHRRSAAEVNRRMSSSRTAGHGSKTPLWSQQE) is disordered. The may stabilize the oligomeric structure stretch occupies residues 40 to 83 (AEVNRRMSSSRTAGHGSKTPLWSQQESYNHSSLGERSAWSNRTL). Residues 40-361 (AEVNRRMSSS…SGTLFKNGDP (322 aa)) are amino-acid kinase domain (AAK). The N-acetyltransferase domain maps to 360 to 511 (DPIRRYSSLE…FAKSHPDSFC (152 aa)). Substrate contacts are provided by residues lysine 386, lysine 429, and 459 to 464 (RSRTTN).

Belongs to the acetyltransferase family. In terms of assembly, homodimer. Homotetramer.

It is found in the mitochondrion matrix. The catalysed reaction is L-glutamate + acetyl-CoA = N-acetyl-L-glutamate + CoA + H(+). Inhibited by L-arginine. Functionally, plays a role in the regulation of ureagenesis by producing the essential cofactor N-acetylglutamate (NAG), thus modulating carbamoylphosphate synthase I (cps1) activity. This is N-acetylglutamate synthase, mitochondrial from Danio rerio (Zebrafish).